The chain runs to 101 residues: uncharacterized protein (101 aa).

Residues 76–101 (KGNVTRRRKKTHLGNDDGKKEAQEKM) are disordered. The span at 88–101 (LGNDDGKKEAQEKM) shows a compositional bias: basic and acidic residues.

This is an uncharacterized protein from Homo sapiens (Human).